Consider the following 79-residue polypeptide: Probable [Fe-S]-dependent transcriptional repressor (79 aa).

Positions 56, 61, 64, and 71 each coordinate iron-sulfur cluster.

Belongs to the FeoC family.

In terms of biological role, may function as a transcriptional regulator that controls feoABC expression. In Klebsiella pneumoniae (strain 342), this protein is Probable [Fe-S]-dependent transcriptional repressor.